The sequence spans 591 residues: Probable indole-3-acetic acid-amido synthetase GH3.11 (591 aa).

Belongs to the IAA-amido conjugating enzyme family. In terms of tissue distribution, expressed in etiolated and green seedlings, roots, callus and highly in flowers.

May catalyze the synthesis of indole-3-acetic acid (IAA)-amino acid conjugates, providing a mechanism for the plant to cope with the presence of excess auxin. This is Probable indole-3-acetic acid-amido synthetase GH3.11 (GH3.11) from Oryza sativa subsp. japonica (Rice).